The following is a 312-amino-acid chain: R2-like ligand binding oxidase (312 aa).

The Mn(2+) site is built by glutamate 68, glutamate 101, and histidine 104. The segment at residues 71–162 (VTQDIQPFMA…AAQVRASATY (92 aa)) is a cross-link (3-(O4'-tyrosyl)-valine (Val-Tyr)). Position 101 (glutamate 101) interacts with Fe cation. Fe cation is bound by residues glutamate 167, glutamate 202, and histidine 205.

This sequence belongs to the ribonucleoside diphosphate reductase small chain family. R2-like ligand binding oxidase subfamily. As to quaternary structure, homodimer. The cofactor is Fe cation. Mn(2+) is required as a cofactor.

In terms of biological role, probable oxidase that might be involved in lipid metabolism. The polypeptide is R2-like ligand binding oxidase (Mycobacterium sp. (strain KMS)).